The chain runs to 399 residues: Enoyl-[acyl-carrier-protein] reductase [NADH] (399 aa).

Residues 48-53 (GASTGY), 74-75 (FE), 111-112 (DA), and 139-140 (LA) contribute to the NAD(+) site. Substrate is bound at residue tyrosine 225. The active-site Proton donor is tyrosine 235. NAD(+) contacts are provided by residues lysine 244 and 273–275 (VVT).

The protein belongs to the TER reductase family. Monomer.

It catalyses the reaction a 2,3-saturated acyl-[ACP] + NAD(+) = a (2E)-enoyl-[ACP] + NADH + H(+). It participates in lipid metabolism; fatty acid biosynthesis. Involved in the final reduction of the elongation cycle of fatty acid synthesis (FAS II). Catalyzes the reduction of a carbon-carbon double bond in an enoyl moiety that is covalently linked to an acyl carrier protein (ACP). The polypeptide is Enoyl-[acyl-carrier-protein] reductase [NADH] (Serratia proteamaculans (strain 568)).